A 416-amino-acid polypeptide reads, in one-letter code: Squalene synthase (416 aa).

NADP(+) contacts are provided by Arg-52 and Arg-77. Asp-80, Glu-83, and Asp-84 together coordinate Mg(2+). Residue Arg-218 coordinates NADP(+). A helical transmembrane segment spans residues 284–304 (SVFNFCAIPQVMAIATLAACY). NADP(+) contacts are provided by Lys-315 and Arg-317. The helical transmembrane segment at 384 to 404 (PIYLSFIMLLAALSWQYLSTL) threads the bilayer.

The protein belongs to the phytoene/squalene synthase family. Requires Mg(2+) as cofactor.

The protein localises to the endoplasmic reticulum membrane. It catalyses the reaction 2 (2E,6E)-farnesyl diphosphate + NADPH + H(+) = squalene + 2 diphosphate + NADP(+). It carries out the reaction 2 (2E,6E)-farnesyl diphosphate + NADH + H(+) = squalene + 2 diphosphate + NAD(+). The enzyme catalyses presqualene diphosphate + NADH + H(+) = squalene + diphosphate + NAD(+). The catalysed reaction is presqualene diphosphate + NADPH + H(+) = squalene + diphosphate + NADP(+). It catalyses the reaction 2 (2E,6E)-farnesyl diphosphate = presqualene diphosphate + diphosphate. It participates in terpene metabolism; lanosterol biosynthesis; lanosterol from farnesyl diphosphate: step 1/3. Catalyzes the condensation of 2 farnesyl pyrophosphate (FPP) moieties to form squalene. Proceeds in two distinct steps. In the first half-reaction, two molecules of FPP react to form the stable presqualene diphosphate intermediate (PSQPP), with concomitant release of a proton and a molecule of inorganic diphosphate. In the second half-reaction, PSQPP undergoes heterolysis, isomerization, and reduction with NADPH or NADH to form squalene. It is the first committed enzyme of the sterol biosynthesis pathway. This chain is Squalene synthase (Fdft1), found in Rattus norvegicus (Rat).